Here is a 658-residue protein sequence, read N- to C-terminus: Putative endo-beta-N-acetylglucosaminidase (658 aa).

Positions 1-23 (MKKVRFIFLALLFFLASPEGAMA) are cleaved as a signal peptide. Cell wall-binding repeat units lie at residues 42-63 (ANEW…DANY), 65-84 (ENEW…GGYM), 86-105 (KSEW…DGKM), 124-145 (IEDW…DGQH), 147-166 (EKEW…GGYL), 185-206 (QQGW…NGNY), 208-227 (DKEW…GGYM), 229-248 (ANEW…DGKM), 250-271 (EKEW…GGYM), 273-292 (ANEW…DGKI), 294-315 (EKEW…GGYM), 317-336 (ANEW…DGKI), and 338-359 (EKEW…GGYM).

It belongs to the glycosyl hydrolase 73 family.

It is found in the secreted. It catalyses the reaction an N(4)-(oligosaccharide-(1-&gt;3)-[oligosaccharide-(1-&gt;6)]-beta-D-Man-(1-&gt;4)-beta-D-GlcNAc-(1-&gt;4)-alpha-D-GlcNAc)-L-asparaginyl-[protein] + H2O = an oligosaccharide-(1-&gt;3)-[oligosaccharide-(1-&gt;6)]-beta-D-Man-(1-&gt;4)-D-GlcNAc + N(4)-(N-acetyl-beta-D-glucosaminyl)-L-asparaginyl-[protein]. Its function is as follows. Plays an important role in cell wall degradation and cell separation. The sequence is that of Putative endo-beta-N-acetylglucosaminidase (lytB) from Streptococcus pneumoniae serotype 4 (strain ATCC BAA-334 / TIGR4).